The chain runs to 103 residues: Cyclotide vitri-A (103 aa).

The signal sequence occupies residues 1 to 9; that stretch reads AAFALPAFA. Positions 10-69 are excised as a propeptide; sequence SFEKDVITPAALEAVLNRKAPLSNIMMENDAIVNVIANVKTVISNPVLEEALLKTNHGVN. Residues 70 to 99 constitute a cross-link (cyclopeptide (Gly-Asn)); the sequence is GIPCGESCVWIPCITSAIGCSCKSKVCYRN. Intrachain disulfides connect C73–C89, C77–C91, and C82–C96. Positions 100-103 are excised as a propeptide; sequence SLDN.

This is a cyclic peptide.

Probably participates in a plant defense mechanism. This is Cyclotide vitri-A from Viola biflora (Yellow wood violet).